We begin with the raw amino-acid sequence, 409 residues long: Toluene 1,2-dioxygenase system ferredoxin--NAD(+) reductase component (409 aa).

Residue 4 to 35 (HVAIIGNGVGGFTTAQALRAEGFEGRISLIGD) participates in FAD binding. Residue 145-173 (RLLIVGGGLIGCEVATTARKLGLSVTILE) coordinates NAD(+).

This sequence belongs to the bacterial ring-hydroxylating dioxygenase ferredoxin reductase family. In terms of assembly, this dioxygenase system consists of four proteins: the two subunits of the hydroxylase component (todC1 and todC2), a ferredoxin (TodB) and a ferredoxin reductase (TodA). It depends on FAD as a cofactor.

The catalysed reaction is 2 reduced [2Fe-2S]-[ferredoxin] + NAD(+) + H(+) = 2 oxidized [2Fe-2S]-[ferredoxin] + NADH. The protein operates within xenobiotic degradation; toluene degradation. Part of the electron transfer component of toluene 1,2-dioxygenase, transfers electrons from ferredoxin (TodB) to NADH. This Pseudomonas putida (Arthrobacter siderocapsulatus) protein is Toluene 1,2-dioxygenase system ferredoxin--NAD(+) reductase component (todA).